We begin with the raw amino-acid sequence, 443 residues long: Thymidine phosphorylase (443 aa).

Belongs to the thymidine/pyrimidine-nucleoside phosphorylase family. In terms of assembly, homodimer.

It carries out the reaction thymidine + phosphate = 2-deoxy-alpha-D-ribose 1-phosphate + thymine. Its pathway is pyrimidine metabolism; dTMP biosynthesis via salvage pathway; dTMP from thymine: step 1/2. The enzymes which catalyze the reversible phosphorolysis of pyrimidine nucleosides are involved in the degradation of these compounds and in their utilization as carbon and energy sources, or in the rescue of pyrimidine bases for nucleotide synthesis. The polypeptide is Thymidine phosphorylase (Shewanella denitrificans (strain OS217 / ATCC BAA-1090 / DSM 15013)).